The chain runs to 33 residues: MNIEVIAQLTMLTIAVITGPLVIFFLAIRKGNL.

Residues 5–25 (VIAQLTMLTIAVITGPLVIFF) form a helical membrane-spanning segment.

The protein belongs to the Psb30/Ycf12 family. As to quaternary structure, PSII is composed of 1 copy each of membrane proteins PsbA, PsbB, PsbC, PsbD, PsbE, PsbF, PsbH, PsbI, PsbJ, PsbK, PsbL, PsbM, PsbT, PsbX, PsbY, PsbZ, Psb30/Ycf12, peripheral proteins of the oxygen-evolving complex and a large number of cofactors. It forms dimeric complexes.

It is found in the plastid. Its subcellular location is the chloroplast thylakoid membrane. Functionally, a core subunit of photosystem II (PSII), probably helps stabilize the reaction center. The polypeptide is Photosystem II reaction center protein Psb30 (Welwitschia mirabilis (Tree tumbo)).